Reading from the N-terminus, the 295-residue chain is Putative attaching and effacing protein homolog (295 aa).

The first 25 residues, 1–25, serve as a signal peptide directing secretion; sequence MSHYKTGHKQPRFRYSVLARCVAWA.

It belongs to the intimin/invasin family.

The chain is Putative attaching and effacing protein homolog (eaeH) from Escherichia coli (strain K12).